Reading from the N-terminus, the 225-residue chain is Suppressor of cytokine signaling 3 (225 aa).

Residues 22 to 33 form a kinase inhibitory region (KIR) region; that stretch reads LKTFSSKSEYQL. Positions 34 to 45 are extended SH2 subdomain (ESS); the sequence is VVNAVRKLQESG. The region spanning 46–142 is the SH2 domain; sequence FYWSAVTGGE…TPSFSLPPTE (97 aa). A disordered region spans residues 131–160; it reads PGTPSFSLPPTEPSSEVPEQPPAQALPGST. The 48-residue stretch at 177–224 folds into the SOCS box domain; sequence VLSRPLSSNVATLQHLCRKTVNGHLDSYEKVTQLPGPIREFLDQYDAP.

In terms of assembly, interacts with multiple activated proteins of the tyrosine kinase signaling pathway including IGF1 receptor, insulin receptor and JAK2. Binding to JAK2 is mediated through the KIR and SH2 domains to a phosphorylated tyrosine residue within the JAK2 JH1 domain. Binds specific activated tyrosine residues of the leptin, EPO, IL12, GSCF and gp130 receptors. Interaction with CSNK1E stabilizes SOCS3 protein. Component of the probable ECS(SOCS3) E3 ubiquitin-protein ligase complex which contains CUL5, RNF7/RBX2, elongin BC complex and SOCS3. Interacts with CUL5, RNF7, ELOB and ELOC. Interacts with FGFR3. Interacts with INSR. Interacts with BCL10; this interaction may interfere with BCL10-binding with PELI2. Interacts with NOD2 (via CARD domain); the interaction promotes NOD2 degradation. In terms of processing, phosphorylated on tyrosine residues after stimulation by the cytokines, IL-2, EPO or IGF1. In terms of tissue distribution, low expression in lung, spleen and thymus. Expressed in Th2 but not TH1 cells.

It participates in protein modification; protein ubiquitination. In terms of biological role, SOCS family proteins form part of a classical negative feedback system that regulates cytokine signal transduction. SOCS3 is involved in negative regulation of cytokines that signal through the JAK/STAT pathway. Inhibits cytokine signal transduction by binding to tyrosine kinase receptors including IL6ST/gp130, LIF, erythropoietin, insulin, IL12, GCSF and leptin receptors. Binding to JAK2 inhibits its kinase activity and regulates IL6 signaling. Suppresses fetal liver erythropoiesis. Regulates onset and maintenance of allergic responses mediated by T-helper type 2 cells. Probable substrate recognition component of a SCF-like ECS (Elongin BC-CUL2/5-SOCS-box protein) E3 ubiquitin-protein ligase complex which mediates the ubiquitination and subsequent proteasomal degradation of target proteins. This chain is Suppressor of cytokine signaling 3, found in Mus musculus (Mouse).